We begin with the raw amino-acid sequence, 549 residues long: Arginine--tRNA ligase (549 aa).

The short motif at 132–142 (ANPTGPLHIGH) is the 'HIGH' region element.

Belongs to the class-I aminoacyl-tRNA synthetase family. In terms of assembly, monomer.

It localises to the cytoplasm. The enzyme catalyses tRNA(Arg) + L-arginine + ATP = L-arginyl-tRNA(Arg) + AMP + diphosphate. The sequence is that of Arginine--tRNA ligase from Paenarthrobacter aurescens (strain TC1).